Here is a 246-residue protein sequence, read N- to C-terminus: Breast cancer metastasis-suppressor 1 (246 aa).

The interval 1 to 57 is disordered; the sequence is MPVQPPSKDTEEMEAEGDSAAEMNGEEEESEEERSGSQTESEEESSEMDDEDYERRR. 2 stretches are compositionally biased toward acidic residues: residues 11 to 32 and 40 to 52; these read EEME…ESEE and ESEE…DDED. The stretch at 51–98 forms a coiled coil; that stretch reads EDYERRRSECVSEMLDLEKQFSELKEKLFRERLSQLRLRLEEVGAERA. Residues Lys184 and Lys242 each participate in a glycyl lysine isopeptide (Lys-Gly) (interchain with G-Cter in SUMO2) cross-link.

Belongs to the BRMS1 family. Homohexamer (Potential). Interacts with SNX6, HDAC1 and RELA. Interacts with ARID4A. Identified in mSin3A corepressor complexes together with SIN3A, SIN3B, RBBP4, RBBP7, SAP30, SUDS3, ARID4A, HDAC1 and HDAC2. Interacts with SPOP; this recruits the protein to a ubiquitin ligase complex containing SPOP and CUL3. In terms of processing, ubiquitinated by a cullin-RING-based BCR (BTB-CUL3-RBX1) E3 ubiquitin-protein ligase complex containing SPOP, leading to proteasomal degradation. As to expression, expression levels are higher in term placentas than in early placentas. Low levels of expression observed in normal pregnancies and in molar pregnancies.

Its subcellular location is the nucleus. It is found in the cytoplasm. Its function is as follows. Transcriptional repressor. Down-regulates transcription activation by NF-kappa-B by promoting the deacetylation of RELA at 'Lys-310'. Promotes HDAC1 binding to promoter regions. Down-regulates expression of anti-apoptotic genes that are controlled by NF-kappa-B. Promotes apoptosis in cells that have inadequate adherence to a substrate, a process called anoikis, and may thereby inhibit metastasis. May be a mediator of metastasis suppression in breast carcinoma. This chain is Breast cancer metastasis-suppressor 1 (BRMS1), found in Homo sapiens (Human).